We begin with the raw amino-acid sequence, 418 residues long: Argininosuccinate synthase (418 aa).

16–24 (AYSGGLDTS) is an ATP binding site. Tyrosine 95 provides a ligand contact to L-citrulline. Glycine 125 lines the ATP pocket. Residues threonine 127, asparagine 131, and aspartate 132 each coordinate L-aspartate. Asparagine 131 is a binding site for L-citrulline. Positions 135, 183, 267, and 279 each coordinate L-citrulline.

Belongs to the argininosuccinate synthase family. Type 1 subfamily. As to quaternary structure, homotetramer.

The protein resides in the cytoplasm. The enzyme catalyses L-citrulline + L-aspartate + ATP = 2-(N(omega)-L-arginino)succinate + AMP + diphosphate + H(+). Its pathway is amino-acid biosynthesis; L-arginine biosynthesis; L-arginine from L-ornithine and carbamoyl phosphate: step 2/3. This is Argininosuccinate synthase from Bifidobacterium adolescentis (strain ATCC 15703 / DSM 20083 / NCTC 11814 / E194a).